The primary structure comprises 149 residues: Flagellar assembly factor FliW (149 aa).

Belongs to the FliW family. In terms of assembly, interacts with translational regulator CsrA and flagellin(s).

Its subcellular location is the cytoplasm. In terms of biological role, acts as an anti-CsrA protein, binds CsrA and prevents it from repressing translation of its target genes, one of which is flagellin. Binds to flagellin and participates in the assembly of the flagellum. In Thermotoga neapolitana (strain ATCC 49049 / DSM 4359 / NBRC 107923 / NS-E), this protein is Flagellar assembly factor FliW.